Reading from the N-terminus, the 54-residue chain is Califin-B (54 aa).

C25 and C53 are joined by a disulfide. L36 is modified (leucine amide).

This sequence belongs to the molluscan ELH family. In terms of assembly, this protein consists of a large 36-residue subunit, bound by a single disulfide-bond to a small 18-residue subunit.

Its subcellular location is the secreted. Injected in sexually mature animals califin B excites LB and LC cells of the abdominal ganglion and cause egg-laying. The sequence is that of Califin-B from Aplysia californica (California sea hare).